Here is a 163-residue protein sequence, read N- to C-terminus: Phosphopantetheine adenylyltransferase (163 aa).

Serine 9 lines the substrate pocket. ATP-binding positions include 9 to 10 (SF) and histidine 17. Substrate contacts are provided by lysine 41, threonine 73, and arginine 87. ATP contacts are provided by residues 88 to 90 (GLR), glutamate 98, and 123 to 129 (YSFISSG).

It belongs to the bacterial CoaD family. As to quaternary structure, homohexamer. Mg(2+) is required as a cofactor.

It localises to the cytoplasm. The enzyme catalyses (R)-4'-phosphopantetheine + ATP + H(+) = 3'-dephospho-CoA + diphosphate. Its pathway is cofactor biosynthesis; coenzyme A biosynthesis; CoA from (R)-pantothenate: step 4/5. Its function is as follows. Reversibly transfers an adenylyl group from ATP to 4'-phosphopantetheine, yielding dephospho-CoA (dPCoA) and pyrophosphate. The sequence is that of Phosphopantetheine adenylyltransferase from Desulforudis audaxviator (strain MP104C).